Here is a 251-residue protein sequence, read N- to C-terminus: MLFDSHLHLDQLSDENIQQTLAHSKIIGMLAVSTNLNSAKKLLNLKQTYPKKLYIAAGFHPEQQLPSLEEQKKLFQWIDEHHSSISAIGEVGLPHYSKRENPNLDYVPYIELLERFILIAKKWDLPLNLHIVHNDVEIALELLQKHNIQRAHFHWFKTDEKSFQKFFSTPYFASLTPDILWNSKTQYVAQHLSLNRLMIETDSPWQHEGFERAGISEQLLAVLQKLAELKSLPLHSVQKQILLNTQQFYRL.

Residues H6, H8, E90, H130, H154, and D202 each coordinate a divalent metal cation.

It belongs to the metallo-dependent hydrolases superfamily. TatD-type hydrolase family. Requires a divalent metal cation as cofactor.

This is an uncharacterized protein from Haemophilus influenzae (strain ATCC 51907 / DSM 11121 / KW20 / Rd).